The sequence spans 258 residues: Trans-aconitate 2-methyltransferase (258 aa).

Belongs to the methyltransferase superfamily. Tam family.

It is found in the cytoplasm. The catalysed reaction is trans-aconitate + S-adenosyl-L-methionine = (E)-3-(methoxycarbonyl)pent-2-enedioate + S-adenosyl-L-homocysteine. In terms of biological role, catalyzes the S-adenosylmethionine monomethyl esterification of trans-aconitate. The chain is Trans-aconitate 2-methyltransferase from Acidovorax ebreus (strain TPSY) (Diaphorobacter sp. (strain TPSY)).